Here is a 256-residue protein sequence, read N- to C-terminus: tRNA (guanine-N(1)-)-methyltransferase (256 aa).

S-adenosyl-L-methionine is bound by residues Gly-119 and Ile-139 to Val-144.

The protein belongs to the RNA methyltransferase TrmD family. In terms of assembly, homodimer.

It localises to the cytoplasm. It carries out the reaction guanosine(37) in tRNA + S-adenosyl-L-methionine = N(1)-methylguanosine(37) in tRNA + S-adenosyl-L-homocysteine + H(+). Functionally, specifically methylates guanosine-37 in various tRNAs. This chain is tRNA (guanine-N(1)-)-methyltransferase, found in Nitrosospira multiformis (strain ATCC 25196 / NCIMB 11849 / C 71).